The following is a 396-amino-acid chain: Apolipoprotein A-IV (396 aa).

The first 20 residues, 1–20 (MFLKAVVLTLALVAVAGARA), serve as a signal peptide directing secretion. Repeat copies occupy residues 33-54 (DYFS…KSEL), 60-81 (ALFQ…KKLV), 82-103 (PFAT…EEIG), 115-136 (PHAN…QRLE), 137-158 (PYAD…RQLT), 159-180 (PYAQ…ASLR), 181-202 (PHAD…GRLT), 203-224 (PYAD…RSLA), 225-246 (PYAQ…FQMK), 247-268 (KNAE…QRLA), 269-286 (PLAE…EGLQ), 287-308 (KSLA…RRVE), and 309-330 (PYGE…QKLG). The 13 X 22 AA approximate tandem repeats stretch occupies residues 33–330 (DYFSQLSNNA…QMEQLRQKLG (298 aa)). Positions 361 to 396 (KESQDKTLSLPELEQQQEQQQEQQQEQVQMLAPLES) are disordered. Positions 374 to 389 (EQQQEQQQEQQQEQVQ) are enriched in low complexity.

The protein belongs to the apolipoprotein A1/A4/E family. In terms of assembly, homodimer. Phosphorylation sites are present in the extracellular medium. As to expression, synthesized primarily in the intestine and secreted in plasma.

It localises to the secreted. In terms of biological role, may have a role in chylomicrons and VLDL secretion and catabolism. Required for efficient activation of lipoprotein lipase by ApoC-II; potent activator of LCAT. Apoa-IV is a major component of HDL and chylomicrons. In Homo sapiens (Human), this protein is Apolipoprotein A-IV.